Here is a 184-residue protein sequence, read N- to C-terminus: ATP synthase subunit b, chloroplastic (184 aa).

The chain crosses the membrane as a helical span at residues 29–49 (TNLINLGVVLGLLVYFGKGVL).

It belongs to the ATPase B chain family. F-type ATPases have 2 components, F(1) - the catalytic core - and F(0) - the membrane proton channel. F(1) has five subunits: alpha(3), beta(3), gamma(1), delta(1), epsilon(1). F(0) has four main subunits: a(1), b(1), b'(1) and c(10-14). The alpha and beta chains form an alternating ring which encloses part of the gamma chain. F(1) is attached to F(0) by a central stalk formed by the gamma and epsilon chains, while a peripheral stalk is formed by the delta, b and b' chains.

It is found in the plastid. The protein localises to the chloroplast thylakoid membrane. Functionally, f(1)F(0) ATP synthase produces ATP from ADP in the presence of a proton or sodium gradient. F-type ATPases consist of two structural domains, F(1) containing the extramembraneous catalytic core and F(0) containing the membrane proton channel, linked together by a central stalk and a peripheral stalk. During catalysis, ATP synthesis in the catalytic domain of F(1) is coupled via a rotary mechanism of the central stalk subunits to proton translocation. Its function is as follows. Component of the F(0) channel, it forms part of the peripheral stalk, linking F(1) to F(0). This is ATP synthase subunit b, chloroplastic from Anthoceros angustus (Hornwort).